A 275-amino-acid polypeptide reads, in one-letter code: Formamidopyrimidine-DNA glycosylase (275 aa).

Proline 2 functions as the Schiff-base intermediate with DNA in the catalytic mechanism. Glutamate 3 serves as the catalytic Proton donor. Lysine 58 acts as the Proton donor; for beta-elimination activity in catalysis. DNA contacts are provided by histidine 93, arginine 111, and arginine 156. The segment at 241–275 (FVYDRAGEPCRVCGTPIRQIVQGQRSTYFCPTCQR) adopts an FPG-type zinc-finger fold. The Proton donor; for delta-elimination activity role is filled by arginine 265.

It belongs to the FPG family. Monomer. Zn(2+) serves as cofactor.

The catalysed reaction is Hydrolysis of DNA containing ring-opened 7-methylguanine residues, releasing 2,6-diamino-4-hydroxy-5-(N-methyl)formamidopyrimidine.. It catalyses the reaction 2'-deoxyribonucleotide-(2'-deoxyribose 5'-phosphate)-2'-deoxyribonucleotide-DNA = a 3'-end 2'-deoxyribonucleotide-(2,3-dehydro-2,3-deoxyribose 5'-phosphate)-DNA + a 5'-end 5'-phospho-2'-deoxyribonucleoside-DNA + H(+). In terms of biological role, involved in base excision repair of DNA damaged by oxidation or by mutagenic agents. Acts as a DNA glycosylase that recognizes and removes damaged bases. Has a preference for oxidized purines, such as 7,8-dihydro-8-oxoguanine (8-oxoG). Has AP (apurinic/apyrimidinic) lyase activity and introduces nicks in the DNA strand. Cleaves the DNA backbone by beta-delta elimination to generate a single-strand break at the site of the removed base with both 3'- and 5'-phosphates. The protein is Formamidopyrimidine-DNA glycosylase of Burkholderia multivorans (strain ATCC 17616 / 249).